The sequence spans 215 residues: ATP-dependent Clp protease proteolytic subunit (215 aa).

Ser111 functions as the Nucleophile in the catalytic mechanism. His136 is an active-site residue.

Belongs to the peptidase S14 family. In terms of assembly, fourteen ClpP subunits assemble into 2 heptameric rings which stack back to back to give a disk-like structure with a central cavity, resembling the structure of eukaryotic proteasomes.

Its subcellular location is the cytoplasm. It catalyses the reaction Hydrolysis of proteins to small peptides in the presence of ATP and magnesium. alpha-casein is the usual test substrate. In the absence of ATP, only oligopeptides shorter than five residues are hydrolyzed (such as succinyl-Leu-Tyr-|-NHMec, and Leu-Tyr-Leu-|-Tyr-Trp, in which cleavage of the -Tyr-|-Leu- and -Tyr-|-Trp bonds also occurs).. Cleaves peptides in various proteins in a process that requires ATP hydrolysis. Has a chymotrypsin-like activity. Plays a major role in the degradation of misfolded proteins. In Hamiltonella defensa subsp. Acyrthosiphon pisum (strain 5AT), this protein is ATP-dependent Clp protease proteolytic subunit.